The chain runs to 1001 residues: Serine/threonine-protein kinase TAO1-A (1001 aa).

A Protein kinase domain is found at 28–281 (FSDLREIGHG…SDELLKNMFV (254 aa)). ATP contacts are provided by residues 34–42 (IGHGSFGAV) and K57. Catalysis depends on D151, which acts as the Proton acceptor. 2 disordered regions span residues 324 to 431 (PAVE…HKSH) and 567 to 586 (KEEL…EWLS). The segment covering 350 to 370 (SNQSIPSMSISASSQSSSVTS) has biased composition (low complexity). Basic and acidic residues-rich tracts occupy residues 375-388 (SDDK…EGDH) and 577-586 (PKKEKQEWLS). 2 coiled-coil regions span residues 458 to 651 (SELR…EHAM) and 754 to 877 (KAVL…EIEA). A disordered region spans residues 911–1001 (SHNPTGGPGP…ISNGSRMSYT (91 aa)). The segment covering 921 to 930 (HWGHPMAGPP) has biased composition (low complexity). Composition is skewed to polar residues over residues 949 to 967 (GSVQ…NSPQ) and 974 to 1001 (SGGQ…MSYT).

It belongs to the protein kinase superfamily. STE Ser/Thr protein kinase family. STE20 subfamily.

The protein resides in the cytoplasm. It catalyses the reaction L-seryl-[protein] + ATP = O-phospho-L-seryl-[protein] + ADP + H(+). It carries out the reaction L-threonyl-[protein] + ATP = O-phospho-L-threonyl-[protein] + ADP + H(+). In terms of biological role, serine/threonine-protein kinase involved in various processes such as p38/mapk14 stress-activated MAPK cascade, DNA damage response and regulation of cytoskeleton stability. Acts as an activator of the p38/MAPK14 stress-activated MAPK cascade by mediating phosphorylation and subsequent activation of upstream MAP kinase kinases. In response to DNA damage, involved in the G2/M transition DNA damage checkpoint by activating the p38/MAPK14 stress-activated MAPK cascade. The polypeptide is Serine/threonine-protein kinase TAO1-A (taok1-a) (Xenopus laevis (African clawed frog)).